A 565-amino-acid chain; its full sequence is Thiol:disulfide interchange protein DsbD (565 aa).

Residues 1–19 (MAQRIFTLILLLCSTSVFA) form the signal peptide. 2 disulfide bridges follow: cysteine 122-cysteine 128 and cysteine 182-cysteine 304. 7 helical membrane passes run 163–183 (LPFS…TPCV), 208–228 (LLTF…GLVV), 243–263 (YVLI…FGLF), 296–316 (IAGL…LLYI), 323–343 (WLGG…LMLI), 357–377 (WMEQ…VFLL), and 384–404 (VWGL…AFIT). Residues 434-565 (WAFGATHTAQ…FSAHLRDRQP (132 aa)) form the Thioredoxin domain. Cysteine 480 and cysteine 483 are oxidised to a cystine.

This sequence belongs to the thioredoxin family. DsbD subfamily.

It is found in the cell inner membrane. The enzyme catalyses [protein]-dithiol + NAD(+) = [protein]-disulfide + NADH + H(+). It catalyses the reaction [protein]-dithiol + NADP(+) = [protein]-disulfide + NADPH + H(+). Its function is as follows. Required to facilitate the formation of correct disulfide bonds in some periplasmic proteins and for the assembly of the periplasmic c-type cytochromes. Acts by transferring electrons from cytoplasmic thioredoxin to the periplasm. This transfer involves a cascade of disulfide bond formation and reduction steps. This Shigella boydii serotype 4 (strain Sb227) protein is Thiol:disulfide interchange protein DsbD.